The chain runs to 112 residues: Large ribosomal subunit protein eL34A (112 aa).

Belongs to the eukaryotic ribosomal protein eL34 family. As to quaternary structure, component of the large ribosomal subunit (LSU). Mature yeast ribosomes consist of a small (40S) and a large (60S) subunit. The 40S small subunit contains 1 molecule of ribosomal RNA (18S rRNA) and at least 33 different proteins. The large 60S subunit contains 3 rRNA molecules (25S, 5.8S and 5S rRNA) and at least 46 different proteins.

It localises to the cytoplasm. Component of the ribosome, a large ribonucleoprotein complex responsible for the synthesis of proteins in the cell. The small ribosomal subunit (SSU) binds messenger RNAs (mRNAs) and translates the encoded message by selecting cognate aminoacyl-transfer RNA (tRNA) molecules. The large subunit (LSU) contains the ribosomal catalytic site termed the peptidyl transferase center (PTC), which catalyzes the formation of peptide bonds, thereby polymerizing the amino acids delivered by tRNAs into a polypeptide chain. The nascent polypeptides leave the ribosome through a tunnel in the LSU and interact with protein factors that function in enzymatic processing, targeting, and the membrane insertion of nascent chains at the exit of the ribosomal tunnel. The protein is Large ribosomal subunit protein eL34A (rpl3401) of Schizosaccharomyces pombe (strain 972 / ATCC 24843) (Fission yeast).